The primary structure comprises 104 residues: Large ribosomal subunit protein bL21 (104 aa).

Belongs to the bacterial ribosomal protein bL21 family. As to quaternary structure, part of the 50S ribosomal subunit. Contacts protein L20.

In terms of biological role, this protein binds to 23S rRNA in the presence of protein L20. This is Large ribosomal subunit protein bL21 from Pseudomonas putida (strain W619).